A 467-amino-acid polypeptide reads, in one-letter code: UDP-N-acetylmuramate--L-alanine ligase (467 aa).

114–120 (GTHGKTT) provides a ligand contact to ATP.

The protein belongs to the MurCDEF family.

Its subcellular location is the cytoplasm. The enzyme catalyses UDP-N-acetyl-alpha-D-muramate + L-alanine + ATP = UDP-N-acetyl-alpha-D-muramoyl-L-alanine + ADP + phosphate + H(+). The protein operates within cell wall biogenesis; peptidoglycan biosynthesis. Functionally, cell wall formation. This is UDP-N-acetylmuramate--L-alanine ligase from Rhodopseudomonas palustris (strain TIE-1).